The following is a 757-amino-acid chain: RNA-directed RNA polymerase catalytic subunit (757 aa).

The interval 50–82 is disordered; the sequence is SEKGKWTTNTETGAPQLNPIDGPLPEDNEPSGY. The segment covering 55-64 has biased composition (polar residues); it reads WTTNTETGAP. Short sequence motifs (nuclear localization signal) lie at residues 187–195 and 203–216; these read RKRRVRDNM and RTIG…NKRS. Residues 249-256 form a promoter-binding site region; the sequence is RGFVYFVE. The RdRp catalytic domain occupies 286–483; the sequence is VRKMMTNSQD…GINMSKKKSY (198 aa).

It belongs to the influenza viruses polymerase PB1 family. In terms of assembly, influenza RNA polymerase is composed of three subunits: PB1, PB2 and PA. Interacts (via N-terminus) with PA (via C-terminus). Interacts (via C-terminus) with PB2 (via N-terminus); this interaction is essential for transcription initiation. Post-translationally, phosphorylated by host PRKCA.

It is found in the host nucleus. The protein resides in the host cytoplasm. It carries out the reaction RNA(n) + a ribonucleoside 5'-triphosphate = RNA(n+1) + diphosphate. In terms of biological role, RNA-dependent RNA polymerase which is responsible for replication and transcription of virus RNA segments. The transcription of viral mRNAs occurs by a unique mechanism called cap-snatching. 5' methylated caps of cellular mRNAs are cleaved after 10-13 nucleotides by PA. In turn, these short capped RNAs are used as primers by PB1 for transcription of viral mRNAs. During virus replication, PB1 initiates RNA synthesis and copy vRNA into complementary RNA (cRNA) which in turn serves as a template for the production of more vRNAs. This is RNA-directed RNA polymerase catalytic subunit from Influenza A virus (strain A/Hong Kong/1/1968 H3N2).